The following is a 65-amino-acid chain: Disintegrin CC8B (65 aa).

In terms of domain architecture, Disintegrin spans 1–65; that stretch reads NSAHPCCDPV…DCPRNPWHKS (65 aa). 4 cysteine pairs are disulfide-bonded: Cys6–Cys29, Cys20–Cys26, Cys25–Cys50, and Cys38–Cys57. A Cell attachment site; atypical (WGD) motif is present at residues 42–44; the sequence is WGD.

This sequence belongs to the disintegrin family. Dimeric disintegrin subfamily. Heterodimer with CC8A; disulfide-linked. In terms of tissue distribution, expressed by the venom gland.

The protein localises to the secreted. Inhibits integrins alpha-IIb/beta-3 (ITGA2B/ITGB3), alpha-V/beta-3 (ITGAV/ITGB3), and alpha-5/beta-1 (ITGA5/ITGB1). The protein is Disintegrin CC8B of Cerastes cerastes (Horned desert viper).